The primary structure comprises 136 residues: Large ribosomal subunit protein uL16c (136 aa).

Belongs to the universal ribosomal protein uL16 family. In terms of assembly, part of the 50S ribosomal subunit.

It localises to the plastid. The protein resides in the chloroplast. The chain is Large ribosomal subunit protein uL16c from Chloranthus spicatus (Chulantree).